The following is a 406-amino-acid chain: Phosphopentomutase (406 aa).

The Mn(2+) site is built by Asp-10, Asp-305, His-310, Asp-346, His-347, and His-358.

This sequence belongs to the phosphopentomutase family. Mn(2+) serves as cofactor.

It is found in the cytoplasm. The enzyme catalyses 2-deoxy-alpha-D-ribose 1-phosphate = 2-deoxy-D-ribose 5-phosphate. The catalysed reaction is alpha-D-ribose 1-phosphate = D-ribose 5-phosphate. The protein operates within carbohydrate degradation; 2-deoxy-D-ribose 1-phosphate degradation; D-glyceraldehyde 3-phosphate and acetaldehyde from 2-deoxy-alpha-D-ribose 1-phosphate: step 1/2. Its function is as follows. Isomerase that catalyzes the conversion of deoxy-ribose 1-phosphate (dRib-1-P) and ribose 1-phosphate (Rib-1-P) to deoxy-ribose 5-phosphate (dRib-5-P) and ribose 5-phosphate (Rib-5-P), respectively. In Photobacterium profundum (strain SS9), this protein is Phosphopentomutase.